Consider the following 359-residue polypeptide: Probable dual-specificity RNA methyltransferase RlmN (359 aa).

Glu91 (proton acceptor) is an active-site residue. Residues 97–329 (QHYGHSVCVT…KKNGVNCVVR (233 aa)) enclose the Radical SAM core domain. Cys104 and Cys340 are joined by a disulfide. [4Fe-4S] cluster-binding residues include Cys111, Cys115, and Cys118. Residues 163 to 164 (GE), Ser195, 218 to 220 (SLH), and Asn296 each bind S-adenosyl-L-methionine. Residue Cys340 is the S-methylcysteine intermediate of the active site.

It belongs to the radical SAM superfamily. RlmN family. It depends on [4Fe-4S] cluster as a cofactor.

It is found in the cytoplasm. The catalysed reaction is adenosine(2503) in 23S rRNA + 2 reduced [2Fe-2S]-[ferredoxin] + 2 S-adenosyl-L-methionine = 2-methyladenosine(2503) in 23S rRNA + 5'-deoxyadenosine + L-methionine + 2 oxidized [2Fe-2S]-[ferredoxin] + S-adenosyl-L-homocysteine. The enzyme catalyses adenosine(37) in tRNA + 2 reduced [2Fe-2S]-[ferredoxin] + 2 S-adenosyl-L-methionine = 2-methyladenosine(37) in tRNA + 5'-deoxyadenosine + L-methionine + 2 oxidized [2Fe-2S]-[ferredoxin] + S-adenosyl-L-homocysteine. Its function is as follows. Specifically methylates position 2 of adenine 2503 in 23S rRNA and position 2 of adenine 37 in tRNAs. The sequence is that of Probable dual-specificity RNA methyltransferase RlmN from Streptococcus pyogenes serotype M5 (strain Manfredo).